Here is a 536-residue protein sequence, read N- to C-terminus: MTLLALKEDRPTPKAVYNWRVYTCAAIASFASCMIGYDSAFIGTTLALPSFKKEFDFASYTPGALALLQSNIVSVYQAGAFFGSLFAFATSYFLGRRKSLIAFSVVFIIGAAIMLAADGQGRGIAPIIAGRVLAGIGVGGASNMVPIYISELAPPAVRGRLVGIYELGWQIGGLVGFWINYGVNTTMAPTRSQWLIPFAVQLIPAGLLFLGSFWIPESPRWLFANGKREEAMKVLCWMRNLEPTDRYIVEEVSYIDADLERYAREVGKGFWKPFLSLKQRKVQWRFFLGGMLFLWQNGSGINAINYYSPTVFRSIGITGTNTGFLTTGIFGVVKMVLTIVWLLWLVDLVGRRRMLFIGATGGSLCMWFIGAYIKIAGPGSTKAEDAKLTSGGIAAIFFFYLWTAFYTPSWNGTPWVINSEMFDQNTRSLGQASAAANNWFWNFIISRFTPQMFIKMEYGVYFFFASLMLLSIVFIYFFIPETKSIPLEAMDRLFEIKPVHNANKILMAELNFDRNPEREESSLDEKDRVTQTENAV.

Topologically, residues 1–26 (MTLLALKEDRPTPKAVYNWRVYTCAA) are cytoplasmic. The chain crosses the membrane as a helical span at residues 27–47 (IASFASCMIGYDSAFIGTTLA). The Extracellular segment spans residues 48–74 (LPSFKKEFDFASYTPGALALLQSNIVS). A helical membrane pass occupies residues 75–95 (VYQAGAFFGSLFAFATSYFLG). Residues 96-98 (RRK) lie on the Cytoplasmic side of the membrane. Residues 99–119 (SLIAFSVVFIIGAAIMLAADG) traverse the membrane as a helical segment. Residues 120–131 (QGRGIAPIIAGR) are Extracellular-facing. The helical transmembrane segment at 132 to 152 (VLAGIGVGGASNMVPIYISEL) threads the bilayer. At 153–160 (APPAVRGR) the chain is on the cytoplasmic side. A helical transmembrane segment spans residues 161–181 (LVGIYELGWQIGGLVGFWINY). Residues 182-195 (GVNTTMAPTRSQWL) lie on the Extracellular side of the membrane. N-linked (GlcNAc...) asparagine glycosylation occurs at Asn184. Residues 196–216 (IPFAVQLIPAGLLFLGSFWIP) traverse the membrane as a helical segment. The Cytoplasmic portion of the chain corresponds to 217 to 285 (ESPRWLFANG…SLKQRKVQWR (69 aa)). Residues 286 to 306 (FFLGGMLFLWQNGSGINAINY) traverse the membrane as a helical segment. Topologically, residues 307–327 (YSPTVFRSIGITGTNTGFLTT) are extracellular. Residues 328–349 (GIFGVVKMVLTIVWLLWLVDLV) form a helical membrane-spanning segment. Residues 350–352 (GRR) are Cytoplasmic-facing. The helical transmembrane segment at 353–373 (RMLFIGATGGSLCMWFIGAYI) threads the bilayer. Topologically, residues 374-389 (KIAGPGSTKAEDAKLT) are extracellular. A helical membrane pass occupies residues 390-410 (SGGIAAIFFFYLWTAFYTPSW). Residues 411–435 (NGTPWVINSEMFDQNTRSLGQASAA) are Cytoplasmic-facing. The helical transmembrane segment at 436 to 456 (ANNWFWNFIISRFTPQMFIKM) threads the bilayer. Residues 457-458 (EY) lie on the Extracellular side of the membrane. A helical transmembrane segment spans residues 459–479 (GVYFFFASLMLLSIVFIYFFI). Residues 480–536 (PETKSIPLEAMDRLFEIKPVHNANKILMAELNFDRNPEREESSLDEKDRVTQTENAV) lie on the Cytoplasmic side of the membrane. Basic and acidic residues predominate over residues 516–530 (PEREESSLDEKDRVT). A disordered region spans residues 516–536 (PEREESSLDEKDRVTQTENAV).

It belongs to the major facilitator superfamily. Sugar transporter (TC 2.A.1.1) family.

The protein resides in the membrane. In Neurospora terricola, this protein is Quinate permease (qa-y).